Reading from the N-terminus, the 158-residue chain is Ribosome maturation factor RimP (158 aa).

The protein belongs to the RimP family.

The protein resides in the cytoplasm. Its function is as follows. Required for maturation of 30S ribosomal subunits. In Pediococcus pentosaceus (strain ATCC 25745 / CCUG 21536 / LMG 10740 / 183-1w), this protein is Ribosome maturation factor RimP.